The chain runs to 927 residues: DIS3-like exonuclease 2 (927 aa).

The segment covering 1–12 (MDLKPNIRRKEK) has biased composition (basic residues). The tract at residues 1–168 (MDLKPNIRRK…DTNNATEMVS (168 aa)) is disordered. Basic and acidic residues predominate over residues 13 to 31 (RNLLKGEAALEKKGSIDRK). Over residues 97 to 106 (VKPKAKKKNS) the composition is skewed to basic residues. Positions 107–152 (KEKISKSSKQDEHKTDVHKESVSKLSKNLESRNNRDENSAKREKNN) are enriched in basic and acidic residues. The segment covering 153 to 168 (SHQVEADTNNATEMVS) has biased composition (polar residues). Positions 453 and 462 each coordinate Mg(2+).

It belongs to the RNR ribonuclease family. DIS3L2 subfamily. Mg(2+) serves as cofactor. Mn(2+) is required as a cofactor.

It is found in the cytoplasm. It localises to the P-body. Its function is as follows. 3'-5'-exoribonuclease that specifically recognizes RNAs polyuridylated at their 3' end and mediates their degradation. Component of an exosome-independent RNA degradation pathway that mediates degradation of cytoplasmic mRNAs that have been deadenylated and subsequently uridylated at their 3'. The sequence is that of DIS3-like exonuclease 2 (dis32) from Schizosaccharomyces pombe (strain 972 / ATCC 24843) (Fission yeast).